A 402-amino-acid polypeptide reads, in one-letter code: NAD-dependent protein deacetylase sirtuin-7 (402 aa).

The segment at 1–23 (MAAGGGLSRSERKAAERVRRLRE) is disordered. A compositionally biased stretch (basic and acidic residues) spans 9–23 (RSERKAAERVRRLRE). In terms of domain architecture, Deacetylase sirtuin-type spans 83 to 330 (PEELRRKVRE…QLLMNELGLE (248 aa)). NAD(+) contacts are provided by residues 108-127 (GAGI…NGVW) and 168-171 (QNCD). The active-site Proton acceptor is His188. 4 residues coordinate Zn(2+): Cys196, Cys199, Cys226, and Cys229. Residues 269-271 (GSS), 298-300 (NLQ), and Cys316 contribute to the NAD(+) site. Residues 355–402 (SHSRKSLCRSREEAPPGDQSDPLASAPPILGGWFGRGCAKRAKRKKVA) are disordered. Residue Arg390 is modified to Asymmetric dimethylarginine; alternate. At Arg390 the chain carries Omega-N-methylarginine; alternate. The span at 392 to 402 (CAKRAKRKKVA) shows a compositional bias: basic residues.

The protein belongs to the sirtuin family. Class IV subfamily. In terms of assembly, interacts with UBTF and the RNA polymerase I complex. Interacts with components of the B-WICH complex, such as MYBBP1A, SMARCA5/SNF2H and BAZ1B/WSTF. Interacts with ELK4, leading to stabilization at target promoters for H3K18Ac deacetylation. Interacts with histone H2A and/or histone H2B. Interacts with DNMT1. Interacts with SIRT1. Requires Zn(2+) as cofactor. Post-translationally, phosphorylated during mitosis. Methylation at Arg-390 by PRMT6 inhibits the H3K18Ac histone deacetylase activity, promoting mitochondria biogenesis and maintaining mitochondria respiration. In terms of processing, ubiquitinated via 'Lys-63'-linked ubiquitin chains. Deubiquitinated by USP7, inhibiting the H3K18Ac histone deacetylase activity and regulating gluconeogenesis. Ubiquitinated by E3 ubiquitin-protein ligase complex containing FBXO7; leading to proteasomal degradation. In terms of tissue distribution, detected in liver, spleen and testis. Detected in embryos.

The protein localises to the nucleus. It localises to the nucleolus. The protein resides in the nucleoplasm. It is found in the chromosome. Its subcellular location is the cytoplasm. It carries out the reaction N(6)-acetyl-L-lysyl-[protein] + NAD(+) + H2O = 2''-O-acetyl-ADP-D-ribose + nicotinamide + L-lysyl-[protein]. The enzyme catalyses N(6)-glutaryl-L-lysyl-[protein] + NAD(+) + H2O = 2''-O-glutaryl-ADP-D-ribose + nicotinamide + L-lysyl-[protein]. It catalyses the reaction N(6)-succinyl-L-lysyl-[protein] + NAD(+) + H2O = 2''-O-succinyl-ADP-D-ribose + nicotinamide + L-lysyl-[protein]. The catalysed reaction is N(6)-propanoyl-L-lysyl-[protein] + NAD(+) + H2O = 3''-O-propanoyl-ADP-D-ribose + nicotinamide + L-lysyl-[protein]. It carries out the reaction N(6)-decanoyl-L-lysyl-[protein] + NAD(+) + H2O = 2''-O-decanoyl-ADP-D-ribose + nicotinamide + L-lysyl-[protein]. With respect to regulation, NAD-dependent protein-lysine deacetylase and deacylase activities are activated by nucleic acids. Histone deacetylase activity is activated by DNA. Protein-lysine deacylase activity is activated by RNA. H3K18Ac histone deacetylase activity is inhibited by methylation at Arg-390. H3K18Ac histone deacetylase activity is inhibited by deubiquitination by USP7. Functionally, NAD-dependent protein-lysine deacylase that can act both as a deacetylase or deacylase (desuccinylase, depropionylase and deglutarylase), depending on the context. Also acts as a dedecanoylase. Specifically mediates deacetylation of histone H3 at 'Lys-18' (H3K18Ac). In contrast to other histone deacetylases, displays strong preference for a specific histone mark, H3K18Ac, directly linked to control of gene expression. H3K18Ac is mainly present around the transcription start site of genes and has been linked to activation of nuclear hormone receptors; SIRT7 thereby acts as a transcription repressor. Moreover, H3K18 hypoacetylation has been reported as a marker of malignancy in various cancers and seems to maintain the transformed phenotype of cancer cells. Also able to mediate deacetylation of histone H3 at 'Lys-36' (H3K36Ac) in the context of nucleosomes. Also mediates deacetylation of non-histone proteins, such as ATM, CDK9, DDX21, DDB1, FBL, FKBP5/FKBP51, GABPB1, RAN, RRP9/U3-55K and POLR1E/PAF53. Enriched in nucleolus where it stimulates transcription activity of the RNA polymerase I complex. Acts by mediating the deacetylation of the RNA polymerase I subunit POLR1E/PAF53, thereby promoting the association of RNA polymerase I with the rDNA promoter region and coding region. In response to metabolic stress, SIRT7 is released from nucleoli leading to hyperacetylation of POLR1E/PAF53 and decreased RNA polymerase I transcription. Required to restore the transcription of ribosomal RNA (rRNA) at the exit from mitosis. Promotes pre-ribosomal RNA (pre-rRNA) cleavage at the 5'-terminal processing site by mediating deacetylation of RRP9/U3-55K, a core subunit of the U3 snoRNP complex. Mediates 'Lys-37' deacetylation of Ran, thereby regulating the nuclear export of NF-kappa-B subunit RELA/p65. Acts as a regulator of DNA damage repair by mediating deacetylation of ATM during the late stages of DNA damage response, promoting ATM dephosphorylation and deactivation. May also deacetylate p53/TP53 and promotes cell survival, however such data need additional confirmation. Suppresses the activity of the DCX (DDB1-CUL4-X-box) E3 ubiquitin-protein ligase complexes by mediating deacetylation of DDB1, which prevents the interaction between DDB1 and CUL4 (CUL4A or CUL4B). Activates RNA polymerase II transcription by mediating deacetylation of CDK9, thereby promoting 'Ser-2' phosphorylation of the C-terminal domain (CTD) of RNA polymerase II. Deacetylates FBL, promoting histone-glutamine methyltransferase activity of FBL. Acts as a regulator of mitochondrial function by catalyzing deacetylation of GABPB1. Regulates Akt/AKT1 activity by mediating deacetylation of FKBP5/FKBP51. Required to prevent R-loop-associated DNA damage and transcription-associated genomic instability by mediating deacetylation and subsequent activation of DDX21, thereby overcoming R-loop-mediated stalling of RNA polymerases. In addition to protein deacetylase activity, also acts as protein-lysine deacylase. Acts as a protein depropionylase by mediating depropionylation of Osterix (SP7), thereby regulating bone formation by osteoblasts. Acts as a histone deglutarylase by mediating deglutarylation of histone H4 on 'Lys-91' (H4K91glu); a mark that destabilizes nucleosomes by promoting dissociation of the H2A-H2B dimers from nucleosomes. Acts as a histone desuccinylase: in response to DNA damage, recruited to DNA double-strand breaks (DSBs) and catalyzes desuccinylation of histone H3 on 'Lys-122' (H3K122succ), thereby promoting chromatin condensation and DSB repair. Also promotes DSB repair by promoting H3K18Ac deacetylation, regulating non-homologous end joining (NHEJ). Along with its role in DNA repair, required for chromosome synapsis during prophase I of female meiosis by catalyzing H3K18Ac deacetylation. Involved in transcriptional repression of LINE-1 retrotransposon via H3K18Ac deacetylation, and promotes their association with the nuclear lamina. Required to stabilize ribosomal DNA (rDNA) heterochromatin and prevent cellular senescence induced by rDNA instability. Acts as a negative regulator of SIRT1 by preventing autodeacetylation of SIRT1, restricting SIRT1 deacetylase activity. This Mus musculus (Mouse) protein is NAD-dependent protein deacetylase sirtuin-7.